A 166-amino-acid chain; its full sequence is Cofilin-2 (166 aa).

Position 2 is an N-acetylalanine (alanine 2). Serine 3 bears the Phosphoserine mark. Residues 4–153 (GVTVNDEVIK…KDRSTLGEKL (150 aa)) form the ADF-H domain. Threonine 6 carries the post-translational modification Phosphothreonine. Residues 30-34 (KKRKK) carry the Nuclear localization signal motif.

It belongs to the actin-binding proteins ADF family. In terms of assembly, interacts with CSRP3; possibly two molecules of CFL2 can interact with one molecule if CSRP3. The phosphorylation of Ser-24 may prevent recognition of the nuclear localization signal. Predominantly expressed in skeletal muscle.

It is found in the nucleus matrix. The protein localises to the cytoplasm. It localises to the cytoskeleton. Functionally, controls reversibly actin polymerization and depolymerization in a pH-sensitive manner. It has the ability to bind G- and F-actin in a 1:1 ratio of cofilin to actin. It is the major component of intranuclear and cytoplasmic actin rods. Required for muscle maintenance. May play a role during the exchange of alpha-actin forms during the early postnatal remodeling of the sarcomere. This chain is Cofilin-2 (Cfl2), found in Mus musculus (Mouse).